The sequence spans 1622 residues: Ferredoxin-dependent glutamate synthase 1, chloroplastic/mitochondrial (1622 aa).

The N-terminal 105 residues, 1-105, are a transit peptide targeting the chloroplast and mitochondrion; sequence MAMQSLSPVP…LEDILSERGA (105 aa). The For GATase activity role is filled by Cys-106. Positions 106–505 constitute a Glutamine amidotransferase type-2 domain; sequence CGVGFIANLD…PGMMIAVDLV (400 aa). 1184-1241 is a binding site for FMN; sequence LTETHQTLIANGLRERVILRVDGGLKSGVDVLMAAAMGADEYGFGSLAMIATGCVMAR. Positions 1237, 1243, and 1248 each coordinate [3Fe-4S] cluster.

The protein belongs to the glutamate synthase family. In terms of assembly, interacts with SHM1. It depends on [3Fe-4S] cluster as a cofactor. FAD serves as cofactor. FMN is required as a cofactor. Highly expressed in leaves. High expression in the leaf mesophyll and phloem companion cell-sieve element complex.

It localises to the plastid. Its subcellular location is the chloroplast stroma. The protein localises to the mitochondrion matrix. It carries out the reaction 2 oxidized [2Fe-2S]-[ferredoxin] + 2 L-glutamate = L-glutamine + 2 reduced [2Fe-2S]-[ferredoxin] + 2-oxoglutarate + 2 H(+). It functions in the pathway amino-acid biosynthesis; L-glutamate biosynthesis via GLT pathway; L-glutamate from 2-oxoglutarate and L-glutamine (ferredoxin route): step 1/1. The protein operates within energy metabolism; nitrogen metabolism. Its function is as follows. Involved in glutamate biosynthesis in leaf. Required for the reassimilation of ammonium ions generated during photorespiration. The chain is Ferredoxin-dependent glutamate synthase 1, chloroplastic/mitochondrial from Arabidopsis thaliana (Mouse-ear cress).